Reading from the N-terminus, the 464-residue chain is FERM domain-containing protein 8 (464 aa).

At M1 the chain carries N-acetylmethionine. The interval 1–22 (MDGTEGSAGQPGPAERSHRSSV) is disordered. Residue S24 is modified to Phosphoserine. The region spanning 30–376 (ADVLVYLADD…YCIELSQAAE (347 aa)) is the FERM domain. The tract at residues 376–408 (EPAGPQDSATGSPSDPSSSLAPVQRPKLRRQGS) is disordered. Phosphoserine is present on residues S383, S387, and S408. Position 419 is a phosphothreonine (T419). S439 and S446 each carry phosphoserine.

Interacts with iRhom1/RHBDF1 and iRhom2/RHBDF2 (via cytoplasmic N-termini); this interaction leads to mutual protein stabilization. Interacts with ADAM17; this interaction is indirect and mediated by iRhom proteins. Interacts with LRP6; this interaction affects LRP6-binding to AXIN1. In terms of tissue distribution, widely expressed, with high expression in heart and spleen.

Its subcellular location is the cytoplasm. The protein resides in the cytosol. It localises to the cell membrane. Promotes the cell surface stability of iRhom1/RHBDF1 and iRhom2/RHBDF2 and prevents their degradation via the endolysosomal pathway. By acting on iRhoms, involved in ADAM17-mediated shedding of TNF, amphiregulin/AREG, HBEGF and TGFA from the cell surface. Negatively regulates Wnt signaling, possibly by antagonizing the recruitment of AXIN1 to LRP6. This chain is FERM domain-containing protein 8 (FRMD8), found in Homo sapiens (Human).